The primary structure comprises 87 residues: LYR motif-containing protein 2 (87 aa).

The N-terminal 19 residues, 1 to 19, are a transit peptide targeting the mitochondrion; it reads MGSRLPPAALTLKQFLVRQ.

The protein belongs to the complex I LYR family.

Its subcellular location is the mitochondrion. Functionally, involved in efficient integration of the N-module into mitochondrial respiratory chain complex I. This is LYR motif-containing protein 2 (lyrm2) from Xenopus laevis (African clawed frog).